We begin with the raw amino-acid sequence, 296 residues long: Large ribosomal subunit protein uL29m (296 aa).

A mitochondrion-targeting transit peptide spans 1 to 19; sequence MSITSIRALLRSAVSLART.

This sequence belongs to the universal ribosomal protein uL29 family. In terms of assembly, component of the mitochondrial large ribosomal subunit. Mature mitochondrial ribosomes consist of a small (37S) and a large (54S) subunit. The 37S subunit contains at least 33 different proteins and 1 molecule of RNA (15S). The 54S subunit contains at least 45 different proteins and 1 molecule of RNA (21S).

The protein resides in the mitochondrion. This chain is Large ribosomal subunit protein uL29m (MRPL4), found in Lodderomyces elongisporus (strain ATCC 11503 / CBS 2605 / JCM 1781 / NBRC 1676 / NRRL YB-4239) (Yeast).